We begin with the raw amino-acid sequence, 308 residues long: Elongation factor Ts (308 aa).

An involved in Mg(2+) ion dislocation from EF-Tu region spans residues 80–83; that stretch reads TDFV.

The protein belongs to the EF-Ts family.

It localises to the cytoplasm. Functionally, associates with the EF-Tu.GDP complex and induces the exchange of GDP to GTP. It remains bound to the aminoacyl-tRNA.EF-Tu.GTP complex up to the GTP hydrolysis stage on the ribosome. The polypeptide is Elongation factor Ts (Allorhizobium ampelinum (strain ATCC BAA-846 / DSM 112012 / S4) (Agrobacterium vitis (strain S4))).